The primary structure comprises 257 residues: Imidazole glycerol phosphate synthase subunit HisF (257 aa).

Catalysis depends on residues aspartate 11 and aspartate 130.

This sequence belongs to the HisA/HisF family. Heterodimer of HisH and HisF.

It localises to the cytoplasm. It carries out the reaction 5-[(5-phospho-1-deoxy-D-ribulos-1-ylimino)methylamino]-1-(5-phospho-beta-D-ribosyl)imidazole-4-carboxamide + L-glutamine = D-erythro-1-(imidazol-4-yl)glycerol 3-phosphate + 5-amino-1-(5-phospho-beta-D-ribosyl)imidazole-4-carboxamide + L-glutamate + H(+). It participates in amino-acid biosynthesis; L-histidine biosynthesis; L-histidine from 5-phospho-alpha-D-ribose 1-diphosphate: step 5/9. IGPS catalyzes the conversion of PRFAR and glutamine to IGP, AICAR and glutamate. The HisF subunit catalyzes the cyclization activity that produces IGP and AICAR from PRFAR using the ammonia provided by the HisH subunit. In Shewanella sp. (strain MR-4), this protein is Imidazole glycerol phosphate synthase subunit HisF.